Here is a 212-residue protein sequence, read N- to C-terminus: Large ribosomal subunit protein uL4 (212 aa).

It belongs to the universal ribosomal protein uL4 family. In terms of assembly, part of the 50S ribosomal subunit.

One of the primary rRNA binding proteins, this protein initially binds near the 5'-end of the 23S rRNA. It is important during the early stages of 50S assembly. It makes multiple contacts with different domains of the 23S rRNA in the assembled 50S subunit and ribosome. Its function is as follows. Forms part of the polypeptide exit tunnel. In Caulobacter sp. (strain K31), this protein is Large ribosomal subunit protein uL4.